Reading from the N-terminus, the 195-residue chain is ATP-dependent Clp protease proteolytic subunit (195 aa).

The Nucleophile role is filled by Ser-98. His-123 is a catalytic residue.

This sequence belongs to the peptidase S14 family. As to quaternary structure, fourteen ClpP subunits assemble into 2 heptameric rings which stack back to back to give a disk-like structure with a central cavity, resembling the structure of eukaryotic proteasomes.

It is found in the cytoplasm. It catalyses the reaction Hydrolysis of proteins to small peptides in the presence of ATP and magnesium. alpha-casein is the usual test substrate. In the absence of ATP, only oligopeptides shorter than five residues are hydrolyzed (such as succinyl-Leu-Tyr-|-NHMec, and Leu-Tyr-Leu-|-Tyr-Trp, in which cleavage of the -Tyr-|-Leu- and -Tyr-|-Trp bonds also occurs).. Its function is as follows. Cleaves peptides in various proteins in a process that requires ATP hydrolysis. Has a chymotrypsin-like activity. Plays a major role in the degradation of misfolded proteins. The protein is ATP-dependent Clp protease proteolytic subunit of Sulfurovum sp. (strain NBC37-1).